Reading from the N-terminus, the 154-residue chain is NADPH-dependent 7-cyano-7-deazaguanine reductase (154 aa).

Residues 1–11 (MAKKPVKDLKQ) show a composition bias toward basic and acidic residues. The segment at 1–31 (MAKKPVKDLKQLGHATPVPASPEEATLERVP) is disordered. The active-site Thioimide intermediate is the Cys-52. Catalysis depends on Asp-59, which acts as the Proton donor. Residues 74 to 76 (IES) and 93 to 94 (HE) contribute to the substrate site.

Belongs to the GTP cyclohydrolase I family. QueF type 1 subfamily.

The protein resides in the cytoplasm. It carries out the reaction 7-aminomethyl-7-carbaguanine + 2 NADP(+) = 7-cyano-7-deazaguanine + 2 NADPH + 3 H(+). It functions in the pathway tRNA modification; tRNA-queuosine biosynthesis. In terms of biological role, catalyzes the NADPH-dependent reduction of 7-cyano-7-deazaguanine (preQ0) to 7-aminomethyl-7-deazaguanine (preQ1). The sequence is that of NADPH-dependent 7-cyano-7-deazaguanine reductase from Parvibaculum lavamentivorans (strain DS-1 / DSM 13023 / NCIMB 13966).